A 302-amino-acid chain; its full sequence is MSEPAQEYRLVLVTGPSGAGRTTAVNALEDMGYEVIDNLPLSFVPRLIEGPAIGPPIALGLDVRNRDFNATALIELIDGLTQDARVQLEVLYVDCSASELIRRYSQTRRRHPLAPAETPAEGVEREIDLLAPVRARADHLIDTSEMSPHDLKAELARWFDRGAATRLAVSVQSFSYKRGVPRGVDMIFDCRFLRNPYWVESLRALDGRDAAVEDYIRSDPRFAPFLEKLRELVLFLLPAQLEEGKAHLSIGFGCTGGQHRSVAVAEILGKALAEAGWPVSKRHRELERRAAAVLPTHQGEKA.

Residue 15-22 (GPSGAGRT) participates in ATP binding. 62 to 65 (DVRN) lines the GTP pocket.

It belongs to the RapZ-like family.

Functionally, displays ATPase and GTPase activities. The chain is Nucleotide-binding protein Rsph17025_2562 from Cereibacter sphaeroides (strain ATCC 17025 / ATH 2.4.3) (Rhodobacter sphaeroides).